A 361-amino-acid polypeptide reads, in one-letter code: Molybdenum import ATP-binding protein ModC (361 aa).

The ABC transporter domain maps to 1-228; sequence MLTINIEKQL…EQMRPWVPLQ (228 aa). 31 to 38 is an ATP binding site; that stretch reads GRSGAGKT. Residues 289-356 form the Mop domain; sequence RSSIRNVLKG…IKGVTMTQMD (68 aa).

This sequence belongs to the ABC transporter superfamily. Molybdate importer (TC 3.A.1.8) family. As to quaternary structure, the complex is composed of two ATP-binding proteins (ModC), two transmembrane proteins (ModB) and a solute-binding protein (ModA).

The protein resides in the cell inner membrane. The enzyme catalyses molybdate(out) + ATP + H2O = molybdate(in) + ADP + phosphate + H(+). In terms of biological role, part of the ABC transporter complex ModABC involved in molybdenum import. Responsible for energy coupling to the transport system. In Shewanella oneidensis (strain ATCC 700550 / JCM 31522 / CIP 106686 / LMG 19005 / NCIMB 14063 / MR-1), this protein is Molybdenum import ATP-binding protein ModC.